Here is a 234-residue protein sequence, read N- to C-terminus: Sugar fermentation stimulation protein homolog (234 aa).

This sequence belongs to the SfsA family.

The protein is Sugar fermentation stimulation protein homolog of Shewanella loihica (strain ATCC BAA-1088 / PV-4).